The following is a 425-amino-acid chain: Light-independent protochlorophyllide reductase subunit N (425 aa).

Residues Cys-17, Cys-42, and Cys-103 each coordinate [4Fe-4S] cluster.

The protein belongs to the BchN/ChlN family. As to quaternary structure, protochlorophyllide reductase is composed of three subunits; ChlL, ChlN and ChlB. Forms a heterotetramer of two ChlB and two ChlN subunits. [4Fe-4S] cluster is required as a cofactor.

The catalysed reaction is chlorophyllide a + oxidized 2[4Fe-4S]-[ferredoxin] + 2 ADP + 2 phosphate = protochlorophyllide a + reduced 2[4Fe-4S]-[ferredoxin] + 2 ATP + 2 H2O. It functions in the pathway porphyrin-containing compound metabolism; chlorophyll biosynthesis (light-independent). Component of the dark-operative protochlorophyllide reductase (DPOR) that uses Mg-ATP and reduced ferredoxin to reduce ring D of protochlorophyllide (Pchlide) to form chlorophyllide a (Chlide). This reaction is light-independent. The NB-protein (ChlN-ChlB) is the catalytic component of the complex. The protein is Light-independent protochlorophyllide reductase subunit N of Synechococcus sp. (strain CC9605).